Consider the following 324-residue polypeptide: 3-hydroxyisobutyrate dehydrogenase, mitochondrial (324 aa).

A mitochondrion-targeting transit peptide spans 1-25 (MSLRVMSPAMLNAWSQTLVRAMSTQ). NAD(+) contacts are provided by residues 29 to 58 (KNIG…HVFD), 92 to 93 (LP), and Thr-121. The active site involves Lys-196. Lys-271 lines the NAD(+) pocket.

This sequence belongs to the HIBADH-related family. 3-hydroxyisobutyrate dehydrogenase subfamily.

The protein resides in the mitochondrion. The catalysed reaction is 3-hydroxy-2-methylpropanoate + NAD(+) = 2-methyl-3-oxopropanoate + NADH + H(+). The protein operates within amino-acid degradation; L-valine degradation. The polypeptide is 3-hydroxyisobutyrate dehydrogenase, mitochondrial (Drosophila melanogaster (Fruit fly)).